The following is a 205-amino-acid chain: Casparian strip membrane protein 4 (205 aa).

The Cytoplasmic segment spans residues Met1–Gly58. Residues Val59 to Ala79 form a helical membrane-spanning segment. Residues Lys80–Ser109 lie on the Extracellular side of the membrane. The chain crosses the membrane as a helical span at residues Phe110–Val130. The Cytoplasmic portion of the chain corresponds to Cys131 to Asp148. Residues Thr149–Ala169 form a helical membrane-spanning segment. The Extracellular portion of the chain corresponds to His170–Phe205. N-linked (GlcNAc...) asparagine glycosylation occurs at Asn173.

Belongs to the Casparian strip membrane proteins (CASP) family. As to quaternary structure, homodimer and heterodimers.

The protein resides in the cell membrane. Its function is as follows. Regulates membrane-cell wall junctions and localized cell wall deposition. Required for establishment of the Casparian strip membrane domain (CSD) and the subsequent formation of Casparian strips, a cell wall modification of the root endodermis that determines an apoplastic barrier between the intraorganismal apoplasm and the extraorganismal apoplasm and prevents lateral diffusion. This chain is Casparian strip membrane protein 4, found in Raphanus sativus (Radish).